We begin with the raw amino-acid sequence, 591 residues long: Protein NRT1/ PTR FAMILY 1.1 (591 aa).

11 consecutive transmembrane segments (helical) span residues 68 to 88, 98 to 118, 139 to 159, 186 to 206, 216 to 236, 329 to 349, 374 to 394, 418 to 438, 460 to 480, 496 to 516, and 543 to 563; these read TVLF…AFLS, IVIA…TAML, SSQL…SGGI, FFGW…TVIV, IGFG…VFAS, LKAL…SINV, IPAG…VVLY, MGLG…VEHY, AMWL…TGIG, IAAS…SVIL, and YYWV…VCSW.

This sequence belongs to the major facilitator superfamily. Proton-dependent oligopeptide transporter (POT/PTR) (TC 2.A.17) family. Expressed in siliques, shoots and roots. Mainly detected in larger expanded leaves, in the companion cells of major veins.

The protein localises to the cell membrane. In terms of biological role, low-affinity nitrate transporter involved in xylem-to-phloem transfer for redistributing nitrate into developing leaves. Not involved in dipeptides transport. This is Protein NRT1/ PTR FAMILY 1.1 (NPF1.1) from Arabidopsis thaliana (Mouse-ear cress).